The chain runs to 148 residues: Protein-export protein SecB (148 aa).

It belongs to the SecB family. Homotetramer, a dimer of dimers. One homotetramer interacts with 1 SecA dimer.

It is found in the cytoplasm. In terms of biological role, one of the proteins required for the normal export of preproteins out of the cell cytoplasm. It is a molecular chaperone that binds to a subset of precursor proteins, maintaining them in a translocation-competent state. It also specifically binds to its receptor SecA. The sequence is that of Protein-export protein SecB from Psychrobacter arcticus (strain DSM 17307 / VKM B-2377 / 273-4).